A 622-amino-acid polypeptide reads, in one-letter code: Cell pattern formation-associated protein stuA (622 aa).

2 disordered regions span residues 1–24 and 62–81; these read MASM…QTYA and YPNS…SISS. The 107-residue stretch at 129–235 folds into the HTH APSES-type domain; the sequence is RVTATLWEDE…QHISNLLYHP (107 aa). Residues 163 to 184 constitute a DNA-binding region (H-T-H motif); it reads GTKLLNVAGMTRGRRDGILKSE. Disordered regions lie at residues 239–517 and 549–622; these read NQRN…TPPR and SNSG…SARR. 3 stretches are compositionally biased toward polar residues: residues 274–283, 302–345, and 355–370; these read LQTPVPSHMS, ASAS…ARSM, and GNNL…QSGY. The segment covering 384–395 has biased composition (low complexity); it reads PQYAPQQPLPQQ. Composition is skewed to polar residues over residues 404-421, 455-470, 480-506, and 549-563; these read MPTS…QRGS, SGYN…TNPS, QLTP…NTAP, and SNSG…SMGS. A nuclear localization domain region spans residues 565-590; the sequence is KRMRDDDDDRIVPPDSRGEFDTKRRK. Over residues 566-586 the composition is skewed to basic and acidic residues; the sequence is RMRDDDDDRIVPPDSRGEFDT.

This sequence belongs to the EFG1/PHD1/stuA family.

It is found in the nucleus. In terms of biological role, transcription factor that regulates asexual reproduction. Binds the StuA-response elements (StRE) with the consensus sequence 5'-(A/T)CGCG(T/A)N(A/C)-3' at the promoters of target genes. Required from the very earliest events of asexual reproduction until completion of conidiophore development, but is not specifically required for differentiation of conidia. Represses transcription of the abaA developmental regulatory gene and of the developmentally regulated awh11 gene. Controls the expression of the catalase-peroxidase gene cpeA. Plays an important role in cell wall biogenesis during the development by controlling the transcription level of fksA. This Emericella nidulans (strain FGSC A4 / ATCC 38163 / CBS 112.46 / NRRL 194 / M139) (Aspergillus nidulans) protein is Cell pattern formation-associated protein stuA.